Consider the following 1174-residue polypeptide: Creatine kinase, flagellar (1174 aa).

A compositionally biased stretch (polar residues) spans 1-14 (MGCAASSQQTTATG). The segment at 1 to 62 (MGCAASSQQT…PFVEPDPNYP (62 aa)) is disordered. A compositionally biased stretch (low complexity) spans 18–39 (AAGEKANPAPANNNPNAANKAE). A Phosphagen kinase N-terminal 1 domain is found at 53–139 (PFVEPDPNYP…FDPTIDKRHN (87 aa)). The stretch at 61-414 (YPDLSKHNNY…EKALEKGSDI (354 aa)) is one 1; approximate repeat. The 243-residue stretch at 166–408 (YVLSCRVRTG…KKLIELEKAL (243 aa)) folds into the Phosphagen kinase C-terminal 1 domain. ATP is bound by residues 169 to 173 (SCRVR), histidine 232, arginine 277, and 333 to 337 (RAGVH). The Phosphagen kinase N-terminal 2 domain occupies 426-512 (RAEQVKEGYP…FDPVIDARHG (87 aa)). The stretch at 434 to 787 (YPDLSKHNNH…EKKLEKGEDI (354 aa)) is one 2; approximate repeat. One can recognise a Phosphagen kinase C-terminal 2 domain in the interval 539–781 (YVLSCRVRTG…ELLVQMEKKL (243 aa)). ATP-binding positions include 542–546 (SCRVR), histidine 605, arginine 706, 734–739 (RGTGGV), and aspartate 749. The Phosphagen kinase N-terminal 3 domain maps to 800–886 (PIKPFSYDYP…FDPVISARHG (87 aa)). The stretch at 808 to 1161 (YPDFSLHNNW…EKALMKGEDI (354 aa)) is one 3; approximate repeat. The 243-residue stretch at 913–1155 (FVLSCRVRTG…KLLVNLEKAL (243 aa)) folds into the Phosphagen kinase C-terminal 3 domain.

Belongs to the ATP:guanido phosphotransferase family. As to quaternary structure, monomer.

It is found in the cytoplasm. The protein resides in the cytoskeleton. The protein localises to the flagellum axoneme. The catalysed reaction is creatine + ATP = N-phosphocreatine + ADP + H(+). Its function is as follows. This axonemal protein participates in an energy shuttle that utilizes phosphocreatine to transfer the energy from ATP generated by the mitochondrion in the sperm head to dynein in the distal portions of the flagellum. This is Creatine kinase, flagellar from Strongylocentrotus purpuratus (Purple sea urchin).